The sequence spans 48 residues: Small polypeptide DEVIL 14 (48 aa).

A helical membrane pass occupies residues 4–23 (TVVLRCCTSVTKVRTWKRCS). The tract at residues 17–48 (RTWKRCSKQIKEQRARLYIIWKCAVFLLSSHD) is required for DVL/RTFL small polypeptide activity.

The protein belongs to the DVL/RTFL small polypeptides family.

The protein resides in the cell membrane. In terms of biological role, small polypeptide acting as a regulatory molecule which coordinates cellular responses required for differentiation, growth and development, probably by restricting polar cell proliferation in lateral organs and coordinating socket cell recruitment and differentiation at trichome sites. The polypeptide is Small polypeptide DEVIL 14 (Arabidopsis thaliana (Mouse-ear cress)).